Here is a 600-residue protein sequence, read N- to C-terminus: Aspartate--tRNA(Asp/Asn) ligase (600 aa).

Glu174 is an L-aspartate binding site. An aspartate region spans residues 198 to 201; the sequence is QLFK. L-aspartate is bound at residue Arg220. Residues 220-222 and Gln229 contribute to the ATP site; that span reads RDE. His457 contributes to the L-aspartate binding site. Residue Glu491 participates in ATP binding. Residue Arg498 coordinates L-aspartate. Residue 543-546 coordinates ATP; it reads GLDR.

This sequence belongs to the class-II aminoacyl-tRNA synthetase family. Type 1 subfamily. Homodimer.

It is found in the cytoplasm. It carries out the reaction tRNA(Asx) + L-aspartate + ATP = L-aspartyl-tRNA(Asx) + AMP + diphosphate. Aspartyl-tRNA synthetase with relaxed tRNA specificity since it is able to aspartylate not only its cognate tRNA(Asp) but also tRNA(Asn). Reaction proceeds in two steps: L-aspartate is first activated by ATP to form Asp-AMP and then transferred to the acceptor end of tRNA(Asp/Asn). The protein is Aspartate--tRNA(Asp/Asn) ligase of Burkholderia multivorans (strain ATCC 17616 / 249).